A 151-amino-acid chain; its full sequence is Endoribonuclease YbeY (151 aa).

Histidine 114, histidine 118, and histidine 124 together coordinate Zn(2+).

This sequence belongs to the endoribonuclease YbeY family. It depends on Zn(2+) as a cofactor.

The protein localises to the cytoplasm. Functionally, single strand-specific metallo-endoribonuclease involved in late-stage 70S ribosome quality control and in maturation of the 3' terminus of the 16S rRNA. The protein is Endoribonuclease YbeY of Hamiltonella defensa subsp. Acyrthosiphon pisum (strain 5AT).